The primary structure comprises 36 residues: Egg-laying hormone (36 aa).

At Lys-36 the chain carries Lysine amide.

It belongs to the molluscan ELH family. As to expression, bag cell neurons.

Its subcellular location is the secreted. Its function is as follows. ELH acts as a neurotransmitter locally, upon neurons of the abdominal ganglion and as a hormone by diffusing into the circulating hemolymph and modulating the activity of other organs. It specifically causes contraction of smooth muscle in the ovotestis and expulsion of the egg string. In Aplysia fasciata (Mottled sea hare), this protein is Egg-laying hormone.